A 249-amino-acid polypeptide reads, in one-letter code: DNA polymerase sliding clamp (249 aa).

It belongs to the PCNA family. As to quaternary structure, homotrimer. The subunits circularize to form a toroid; DNA passes through its center. Replication factor C (RFC) is required to load the toroid on the DNA.

Functionally, sliding clamp subunit that acts as a moving platform for DNA processing. Responsible for tethering the catalytic subunit of DNA polymerase and other proteins to DNA during high-speed replication. The sequence is that of DNA polymerase sliding clamp from Thermococcus fumicolans.